A 506-amino-acid polypeptide reads, in one-letter code: Protoheme IX farnesyltransferase, mitochondrial (506 aa).

Residues 1-42 constitute a mitochondrion transit peptide; the sequence is MILRSSLGRLGVARESPLCLQCLNRSRPSFPAVNKLASISRL. The span at 45–61 shows a compositional bias: polar residues; it reads TVAGQSPSSSVNKTYFS. Positions 45 to 131 are disordered; the sequence is TVAGQSPSSS…AEPVIPPDAS (87 aa). A compositionally biased stretch (low complexity) spans 73-88; sequence PSLFTSLSPSNSPSQL. A compositionally biased stretch (polar residues) spans 89 to 100; it reads NRGHSTPSTSPE. The next 8 helical transmembrane spans lie at 163 to 183, 199 to 221, 247 to 267, 269 to 289, 297 to 317, 337 to 357, 390 to 410, and 439 to 459; these read FLVLLSTTSAYGIYPVSSILA, LTFLYLTTGTFLSACSANTLNMI, AAVFFAIATAAVGLGLLYFGT, PTVTGLSAANIALYAFVYTPL, TWIGAIVGGIPPMMGWVAAAG, LGGWLLGGILFAWQFPHFNAL, VLMFPLSIGLWWAGIVGHGFL, and GLFWASIWQLPILLVGALVTK.

It belongs to the UbiA prenyltransferase family.

The protein localises to the mitochondrion membrane. It carries out the reaction heme b + (2E,6E)-farnesyl diphosphate + H2O = Fe(II)-heme o + diphosphate. Functionally, converts protoheme IX and farnesyl diphosphate to heme O. This chain is Protoheme IX farnesyltransferase, mitochondrial (cox10), found in Emericella nidulans (strain FGSC A4 / ATCC 38163 / CBS 112.46 / NRRL 194 / M139) (Aspergillus nidulans).